The primary structure comprises 125 residues: Small ribosomal subunit protein bS6 (125 aa).

Belongs to the bacterial ribosomal protein bS6 family.

In terms of biological role, binds together with bS18 to 16S ribosomal RNA. This Pasteurella multocida (strain Pm70) protein is Small ribosomal subunit protein bS6 (rpsF).